The sequence spans 294 residues: MNTNQSNPNTDLTDDANIEHTLHRLLTQANNHFDDTVKIDGQSLDLGKDLEQVMMDNLDCTDIFDSDIASQKHLTLESLFNDEHNTDSSTLLEMQRSANDSLVGIDLDRHKKGYTGKASLDKSTNQNNVHKPDKEQKNYKIDKPTIKKKKSLLKTTNEPMLSPASLSPSSSLASSDANESHLKIESMITDITSKIDSARQDIVSATKPAKFTNEFTISQISEMKARIINTHKLLLNFNFIKEGYARSCIQLKKSMDSLKDSEIHRAHLLVENDDLKQQILELTQKLNEKSSKES.

The tract at residues 114–178 is disordered; the sequence is YTGKASLDKS…SSSLASSDAN (65 aa). The segment covering 130-145 has biased composition (basic and acidic residues); it reads HKPDKEQKNYKIDKPT. Residues 153 to 175 show a composition bias toward low complexity; it reads LKTTNEPMLSPASLSPSSSLASS.

It is found in the cytoplasm. The protein localises to the nucleus. Its function is as follows. Involved in cation homeostasis and in the regulation of the cation stress signaling cascades. Also involved in bipolar budding. The sequence is that of Protein ATC1/LIC4 (ATC1) from Saccharomyces cerevisiae (strain ATCC 204508 / S288c) (Baker's yeast).